A 192-amino-acid chain; its full sequence is UPF0149 protein YPO0911/y3298/YP_3608 (192 aa).

It belongs to the UPF0149 family.

The sequence is that of UPF0149 protein YPO0911/y3298/YP_3608 from Yersinia pestis.